The sequence spans 440 residues: MEGGGGGGSLPPFLSKTYEMVDDPSTDAVVGWTPAGTSFVVANQPEFCRDLLPKYFKHNNFSSFVRQLNTYGFRKVDPEQWEFANEDFIKGQRHRLKNIHRRKPIFSHSSHSQGAGPLTDNERKDYEEEIERLKSDNAALSSELQNNTLKKLNMEKRMQALEEKLFVVEDQQRSLISYVREIVKAPGFLSSFVQQQDHHRKKRRLPIPISFHEDANTQENQIMPCDLTNSPAQTFYRESFDKMESSLNSLENFLREASEEFGNDISYDDGVPGPSSTVVLTELHSPGESDPRVSSPPTRMRTSSAGAGDSHSSRDVAESTSCAESPPIPQMHSRVDTRAKVSEIDVNSEPAVTETGPSRDQPAEEPPAVTPGANDGFWQQFLTEQPGSSDAHQEAQSERRDGGNKVDEMKSGDRQHLWWGKRNVEQITEKLGLLTSTEKT.

Residues 121–181 adopt a coiled-coil conformation; it reads NERKDYEEEI…QRSLISYVRE (61 aa). Residues 133 to 183 form a hydrophobic repeat HR-A/B region; sequence LKSDNAALSSELQNNTLKKLNMEKRMQALEEKLFVVEDQQRSLISYVREIV. The Nuclear export signal motif lies at 158 to 163; the sequence is MQALEE. Residues 200–204 carry the Nuclear localization signal motif; that stretch reads RKKRR. Residues 264–417 form a disordered region; that stretch reads DISYDDGVPG…EMKSGDRQHL (154 aa). A compositionally biased stretch (polar residues) spans 295–305; it reads SPPTRMRTSSA. Basic and acidic residues predominate over residues 333-343; sequence SRVDTRAKVSE. Residues 375–384 carry the AHA motif; sequence DGFWQQFLTE. Residues 380–390 are compositionally biased toward polar residues; sequence QFLTEQPGSSD. A compositionally biased stretch (basic and acidic residues) spans 391–417; sequence AHQEAQSERRDGGNKVDEMKSGDRQHL.

This sequence belongs to the HSF family. Class A subfamily. Homotrimer. Exhibits temperature-dependent phosphorylation.

Its subcellular location is the cytoplasm. It is found in the nucleus. In terms of biological role, transcriptional regulator that specifically binds DNA of heat shock promoter elements (HSE). This is Heat stress transcription factor A-4b (HSFA4B) from Oryza sativa subsp. japonica (Rice).